Here is a 260-residue protein sequence, read N- to C-terminus: MVLIRVLANLLILQLSYAQKSSELIIGGDECNINEHRFLVALYTFRSRRFHCGGTLINQEWVLSAARCDRKNIRIKLGMHSTNVTNEDVQTRVPKEKFFCLSSKTYTKWNKDIMLIRLKRPVNNSTHIAPVSLPSNPPSLGSVCRVMGWGTISATKETHPDVPHCANINILDYSVCRAAYARLPATSRTLCAGILEGGKDTCHGDSGGPLICNGQVQGIVSWGGHPCGQPRKPGLYTKVFDHLDWIKSIIAGNKDATCPP.

A signal peptide spans 1–18 (MVLIRVLANLLILQLSYA). The propeptide occupies 19–24 (QKSSEL). In terms of domain architecture, Peptidase S1 spans 25–251 (IIGGDECNIN…HLDWIKSIIA (227 aa)). 6 disulfides stabilise this stretch: cysteine 31/cysteine 165, cysteine 52/cysteine 68, cysteine 100/cysteine 258, cysteine 144/cysteine 212, cysteine 176/cysteine 191, and cysteine 202/cysteine 227. N-linked (GlcNAc...) asparagine glycosylation is found at asparagine 83, asparagine 123, and asparagine 124.

Belongs to the peptidase S1 family. Snake venom subfamily. Expressed by the venom gland.

It localises to the secreted. Snake venom serine protease homolog that may act in the hemostasis system of the prey. The sequence is that of Snake venom serine protease homolog 2A (TLG2A) from Craspedocephalus gramineus (Bamboo pit viper).